Reading from the N-terminus, the 64-residue chain is Large ribosomal subunit protein bL35 (64 aa).

The interval Met1–Phe27 is disordered.

It belongs to the bacterial ribosomal protein bL35 family.

This is Large ribosomal subunit protein bL35 from Azotobacter vinelandii (strain DJ / ATCC BAA-1303).